The sequence spans 168 residues: Cyclin-dependent kinase 4 inhibitor C (168 aa).

5 ANK repeats span residues 4-33 (PWGN…NVNA), 37-65 (FGRT…NPNL), 69-98 (TGFA…DVNI), 102-132 (EGNL…NVGH), and 136-165 (KGDT…GGAT).

This sequence belongs to the CDKN2 cyclin-dependent kinase inhibitor family. As to quaternary structure, heterodimer of p18 with CDK6.

In terms of biological role, interacts strongly with CDK6, weakly with CDK4. Inhibits cell growth and proliferation with a correlated dependence on endogenous retinoblastoma protein RB. The sequence is that of Cyclin-dependent kinase 4 inhibitor C (Cdkn2c) from Mus musculus (Mouse).